The following is a 251-amino-acid chain: Cytochrome c oxidase subunit 2 (251 aa).

Positions 1 to 15 (MLNLLYNQIFNVILN) are cleaved as a signal peptide. Residues 16–41 (DVPTPYNTYFQDSATPNQEGILELHD) are Mitochondrial intermembrane-facing. Residues 42–62 (NIMFYLLVILGLVSWLLFTIT) traverse the membrane as a helical segment. Residues 63 to 82 (RTYSKNPIAYKYIKHGQTIE) lie on the Mitochondrial matrix side of the membrane. A helical transmembrane segment spans residues 83-103 (IIWTIFPAVILLIIAFPSFIL). Over 104-251 (LYLCDEVISP…PAFLEWLNEQ (148 aa)) the chain is Mitochondrial intermembrane. Cu cation-binding residues include histidine 186, cysteine 221, glutamate 223, cysteine 225, histidine 229, and methionine 232. Glutamate 223 provides a ligand contact to Mg(2+).

The protein belongs to the cytochrome c oxidase subunit 2 family. In terms of assembly, component of the cytochrome c oxidase (complex IV, CIV), a multisubunit enzyme composed of a catalytic core of 3 subunits and several supernumerary subunits. The complex exists as a monomer or a dimer and forms supercomplexes (SCs) in the inner mitochondrial membrane with ubiquinol-cytochrome c oxidoreductase (cytochrome b-c1 complex, complex III, CIII). Cu cation is required as a cofactor. In terms of processing, the signal sequence of COX2 is processed by IMP1.

The protein localises to the mitochondrion inner membrane. The catalysed reaction is 4 Fe(II)-[cytochrome c] + O2 + 8 H(+)(in) = 4 Fe(III)-[cytochrome c] + 2 H2O + 4 H(+)(out). Functionally, component of the cytochrome c oxidase, the last enzyme in the mitochondrial electron transport chain which drives oxidative phosphorylation. The respiratory chain contains 3 multisubunit complexes succinate dehydrogenase (complex II, CII), ubiquinol-cytochrome c oxidoreductase (cytochrome b-c1 complex, complex III, CIII) and cytochrome c oxidase (complex IV, CIV), that cooperate to transfer electrons derived from NADH and succinate to molecular oxygen, creating an electrochemical gradient over the inner membrane that drives transmembrane transport and the ATP synthase. Cytochrome c oxidase is the component of the respiratory chain that catalyzes the reduction of oxygen to water. Electrons originating from reduced cytochrome c in the intermembrane space (IMS) are transferred via the dinuclear copper A center (CU(A)) of subunit 2 and heme A of subunit 1 to the active site in subunit 1, a binuclear center (BNC) formed by heme A3 and copper B (CU(B)). The BNC reduces molecular oxygen to 2 water molecules using 4 electrons from cytochrome c in the IMS and 4 protons from the mitochondrial matrix. The sequence is that of Cytochrome c oxidase subunit 2 (COX2) from Lachancea thermotolerans (strain ATCC 56472 / CBS 6340 / NRRL Y-8284) (Yeast).